We begin with the raw amino-acid sequence, 400 residues long: Enoyl-[acyl-carrier-protein] reductase [NADH] (400 aa).

Residues 48–53 (GASTGY), 74–75 (FE), 111–112 (DA), and 139–140 (LA) each bind NAD(+). Tyr225 is a binding site for substrate. The Proton donor role is filled by Tyr235. NAD(+) contacts are provided by residues Lys244 and 273–275 (VVT).

It belongs to the TER reductase family. As to quaternary structure, monomer.

The enzyme catalyses a 2,3-saturated acyl-[ACP] + NAD(+) = a (2E)-enoyl-[ACP] + NADH + H(+). It participates in lipid metabolism; fatty acid biosynthesis. Its function is as follows. Involved in the final reduction of the elongation cycle of fatty acid synthesis (FAS II). Catalyzes the reduction of a carbon-carbon double bond in an enoyl moiety that is covalently linked to an acyl carrier protein (ACP). The sequence is that of Enoyl-[acyl-carrier-protein] reductase [NADH] from Burkholderia multivorans (strain ATCC 17616 / 249).